A 188-amino-acid polypeptide reads, in one-letter code: PRA1 family protein 3 (188 aa).

Methionine 1 carries the N-acetylmethionine modification. The Cytoplasmic portion of the chain corresponds to 1–35; the sequence is MDVNIAPLRAWDDFFPGSDRFARPDFRDISKWNNR. 2 helical membrane-spanning segments follow: residues 36–56 and 57–77; these read VVSN…MMIS and VVGF…VLVF. At 78–93 the chain is on the cytoplasmic side; that stretch reads TGFVWAAHNKDILRRL. Transmembrane regions (helical) follow at residues 94–114 and 115–135; these read KKQY…FLIS and MFGG…LMFI. The interval 103–117 is required for homodimer formation and heterodimer formation with ARL6IP1; the sequence is MVVMLASYFLISMFG. The Cytoplasmic portion of the chain corresponds to 136 to 188; that stretch reads HASLRLRNLKNKLENKIEGIGLKRTPMGIVLDALEQQEENISKFADYISKVNE. The tract at residues 136–188 is targeting to endoplasmic reticulum membrane; sequence HASLRLRNLKNKLENKIEGIGLKRTPMGIVLDALEQQEENISKFADYISKVNE.

It belongs to the PRA1 family. As to quaternary structure, homodimer. Heterodimer with ARL6IP1. Forms multimers. Interacts with ARL6. Interacts with prenylated RAB1A and RAB3A. Interacts with SLC1A1/EAAC1. Interacts with RTN2 (via first transmembrane domain). Does not interact with VAMP1, VAMP2 or VAMP3.

It localises to the endoplasmic reticulum membrane. It is found in the cell membrane. Its subcellular location is the cytoplasm. The protein localises to the cytoskeleton. In terms of biological role, regulates intracellular concentrations of taurine and glutamate. Negatively modulates SLC1A1/EAAC1 glutamate transport activity by decreasing its affinity for glutamate in a PKC activity-dependent manner. Plays a role in the retention of SLC1A1/EAAC1 in the endoplasmic reticulum. In Sus scrofa (Pig), this protein is PRA1 family protein 3 (ARL6IP5).